Consider the following 304-residue polypeptide: Protein Largen (304 aa).

The span at 1-22 shows a compositional bias: low complexity; that stretch reads MSAKSKGNPSSSSAAEGPPAAS. 4 disordered regions span residues 1-27, 66-109, 114-133, and 236-304; these read MSAK…TKVK, QLED…PPAH, LTVL…TPVR, and EPVH…TTTV. Residues 33-70 adopt a coiled-coil conformation; sequence IVEDLELVLGDLKDVAKELKEVVDQIDTLTSDLQLEDE. Positions 77–91 are enriched in low complexity; that stretch reads TDTLNSSSSGTTASS. Composition is skewed to pro residues over residues 120–129 and 275–289; these read PNPPPPPPRL and FPPP…PAAP.

Regulator of cell size that promotes cell size increase independently of mTOR and Hippo signaling pathways. Acts by stimulating the translation of specific mRNAs, including those encoding proteins affecting mitochondrial functions. Increases mitochondrial mass and respiration. The polypeptide is Protein Largen (Prr16) (Mus musculus (Mouse)).